Here is a 624-residue protein sequence, read N- to C-terminus: Phosphatidylserine decarboxylase proenzyme 2 (624 aa).

The interval 1–30 is disordered; that stretch reads MGHSPSRHNACGGGGGDGESPPSPLPSRFE. Residues 16-129 enclose the C2 domain; the sequence is GDGESPPSPL…KDLDEHSEVL (114 aa). EF-hand domains are found at residues 156 to 191 and 192 to 227; these read TEQS…FGNK and LAVA…QQEK. The Ca(2+) site is built by aspartate 169, asparagine 171, aspartate 173, glutamate 175, glutamate 180, aspartate 205, asparagine 207, aspartate 209, and glutamate 216. Residues aspartate 425, histidine 481, and serine 569 each act as charge relay system; for autoendoproteolytic cleavage activity in the active site. Serine 569 acts as the Schiff-base intermediate with substrate; via pyruvic acid; for decarboxylase activity in catalysis. Serine 569 is subject to Pyruvic acid (Ser); by autocatalysis.

Belongs to the phosphatidylserine decarboxylase family. PSD-B subfamily. Eukaryotic type II sub-subfamily. As to quaternary structure, heterodimer of a large membrane-associated beta subunit and a small pyruvoyl-containing alpha subunit. The cofactor is pyruvate. In terms of processing, is synthesized initially as an inactive proenzyme. Formation of the active enzyme involves a self-maturation process in which the active site pyruvoyl group is generated from an internal serine residue via an autocatalytic post-translational modification. Two non-identical subunits are generated from the proenzyme in this reaction, and the pyruvate is formed at the N-terminus of the alpha chain, which is derived from the carboxyl end of the proenzyme. The autoendoproteolytic cleavage occurs by a canonical serine protease mechanism, in which the side chain hydroxyl group of the serine supplies its oxygen atom to form the C-terminus of the beta chain, while the remainder of the serine residue undergoes an oxidative deamination to produce ammonia and the pyruvoyl prosthetic group on the alpha chain. During this reaction, the Ser that is part of the protease active site of the proenzyme becomes the pyruvoyl prosthetic group, which constitutes an essential element of the active site of the mature decarboxylase.

Its subcellular location is the vacuole membrane. The protein localises to the endoplasmic reticulum membrane. The enzyme catalyses a 1,2-diacyl-sn-glycero-3-phospho-L-serine + H(+) = a 1,2-diacyl-sn-glycero-3-phosphoethanolamine + CO2. Its pathway is phospholipid metabolism; phosphatidylethanolamine biosynthesis; phosphatidylethanolamine from CDP-diacylglycerol: step 2/2. Functionally, catalyzes the formation of phosphatidylethanolamine (PtdEtn) from phosphatidylserine (PtdSer). Plays a central role in phospholipid metabolism and in the interorganelle trafficking of phosphatidylserine. This is Phosphatidylserine decarboxylase proenzyme 2 from Oryza sativa subsp. japonica (Rice).